The following is a 152-amino-acid chain: Putative pre-16S rRNA nuclease (152 aa).

The protein belongs to the YqgF nuclease family.

The protein localises to the cytoplasm. Its function is as follows. Could be a nuclease involved in processing of the 5'-end of pre-16S rRNA. This Bifidobacterium longum (strain DJO10A) protein is Putative pre-16S rRNA nuclease.